Consider the following 352-residue polypeptide: Leukotriene B4 receptor 1 (352 aa).

Topologically, residues 1 to 19 are extracellular; that stretch reads MNTTSSAAPPSLGVEFISL. N2 is a glycosylation site (N-linked (GlcNAc...) asparagine). The helical transmembrane segment at 20-42 threads the bilayer; it reads LAIILLSVALAVGLPGNSFVVWS. Over 43-54 the chain is Cytoplasmic; sequence ILKRMQKRSVTA. Residues 55–75 form a helical membrane-spanning segment; it reads LMVLNLALADLAVLLTAPFFL. Residues 76–91 are Extracellular-facing; sequence HFLAQGTWSFGLAGCR. A helical transmembrane segment spans residues 92-113; it reads LCHYVCGVSMYASVLLITAMSL. The Cytoplasmic portion of the chain corresponds to 114–138; that stretch reads DRSLAVARPFVSQKLRTKAMARRVL. A helical transmembrane segment spans residues 139-159; it reads AGIWVLSFLLATPVLAYRTVV. Topologically, residues 160 to 178 are extracellular; the sequence is PWKTNMSLCFPRYPSEGHR. N164 carries N-linked (GlcNAc...) asparagine glycosylation. A helical transmembrane segment spans residues 179–199; that stretch reads AFHLIFEAVTGFLLPFLAVVA. Over 200 to 221 the chain is Cytoplasmic; sequence SYSDIGRRLQARRFRRSRRTGR. A helical membrane pass occupies residues 222-242; it reads LVVLIILTFAAFWLPYHVVNL. The Extracellular portion of the chain corresponds to 243-268; it reads AEAGRALAGQAAGLGLVGKRLSLARN. A helical transmembrane segment spans residues 269–289; that stretch reads VLIALAFLSSSVNPVLYACAG. Topologically, residues 290–352 are cytoplasmic; sequence GGLLRSAGVG…SSPLKLNELN (63 aa). Polar residues-rich tracts occupy residues 310–326 and 338–352; these read SEAS…QTAR and ESLT…NELN. The interval 310–352 is disordered; it reads SEASSTRRGGSLGQTARSGPAALEPGPSESLTASSPLKLNELN.

This sequence belongs to the G-protein coupled receptor 1 family. In terms of processing, phosphorylated by GRK6 upon leukotriene B4 binding; which promotes desensitization. Expressed at highest levels in heart, skeletal muscle and at lower levels in brain and liver. High level of expression in lymphoid tissues.

It is found in the cell membrane. In terms of biological role, receptor for extracellular ATP &gt; UTP and ADP. The activity of this receptor is mediated by G proteins which activate a phosphatidylinositol-calcium second messenger system. May be the cardiac P2Y receptor involved in the regulation of cardiac muscle contraction through modulation of L-type calcium currents. Is a receptor for leukotriene B4, a potent chemoattractant involved in inflammation and immune response. This Homo sapiens (Human) protein is Leukotriene B4 receptor 1 (LTB4R).